The sequence spans 340 residues: Speriolin-like protein (340 aa).

Disordered regions lie at residues Gly42–Ser73 and Ala94–Pro135. At Ser60 the chain carries Phosphoserine. Basic and acidic residues predominate over residues Pro123–Leu133. The residue at position 134 (Ser134) is a Phosphoserine.

It belongs to the speriolin family.

Its subcellular location is the cytoplasm. This is Speriolin-like protein (SPATC1L) from Homo sapiens (Human).